Consider the following 767-residue polypeptide: Transducin-like enhancer protein 1 (767 aa).

Disordered regions lie at residues 1 to 26 (MFPQNRPPTHLQASVATGAASGPPQS) and 200 to 346 (ADAE…TSAS). Composition is skewed to basic and acidic residues over residues 200 to 209 (ADAEHRERDP), 235 to 255 (RKTEEKDFGTDYGSDADRSED), and 277 to 289 (NGVDKPTLQRKDP). Positions 212–274 (SCLTLPNGER…SPHSVHSYSS (63 aa)) are CCN domain. The segment covering 294–306 (PNSMTSSSSVSPS) has biased composition (low complexity). The segment covering 324–346 (LKSSTPNSQSDLNTPGPSGTSAS) has biased composition (polar residues). WD repeat units lie at residues 467–498 (GIPRHARQLHVLNHGEVVCAVTISNSTRHVYT), 525–555 (NRDNYIRSCKLLPDGRSLIVGGEASTLSIWD), 569–599 (SSAPACYALAISPDAKVCFSCCSDGNIVVWD), 611–641 (GHTDGASCIDISHDGTKLWTGGLDNTVRCWD), 693–723 (LHESCVLSLQFASCGKWFVSTGKDNLLNAWR), and 734–764 (KESSSVLSCDVSTDDQFIVTGSGDKKATVYE).

Belongs to the WD repeat Groucho/TLE family. Post-translationally, ubiquitinated by XIAP/BIRC4. In terms of tissue distribution, abundantly expressed in brain, lung, testis and ovary in comparison with liver, heart, kidney and spleen. Ubiquitously expressed in the developing embryo. Present in unfertilized and fertilized eggs.

The protein resides in the nucleus. Its function is as follows. Nuclear effector molecule. The polypeptide is Transducin-like enhancer protein 1 (esg1) (Xenopus laevis (African clawed frog)).